Reading from the N-terminus, the 398-residue chain is Dual-specificity RNA methyltransferase RlmN (398 aa).

E119 (proton acceptor) is an active-site residue. The 240-residue stretch at E125–D364 folds into the Radical SAM core domain. C132 and C369 form a disulfide bridge. 3 residues coordinate [4Fe-4S] cluster: C139, C143, and C146. Residues G193 to E194, S225, S247 to H249, and N326 each bind S-adenosyl-L-methionine. C369 functions as the S-methylcysteine intermediate in the catalytic mechanism.

This sequence belongs to the radical SAM superfamily. RlmN family. Requires [4Fe-4S] cluster as cofactor.

The protein localises to the cytoplasm. The catalysed reaction is adenosine(2503) in 23S rRNA + 2 reduced [2Fe-2S]-[ferredoxin] + 2 S-adenosyl-L-methionine = 2-methyladenosine(2503) in 23S rRNA + 5'-deoxyadenosine + L-methionine + 2 oxidized [2Fe-2S]-[ferredoxin] + S-adenosyl-L-homocysteine. It carries out the reaction adenosine(37) in tRNA + 2 reduced [2Fe-2S]-[ferredoxin] + 2 S-adenosyl-L-methionine = 2-methyladenosine(37) in tRNA + 5'-deoxyadenosine + L-methionine + 2 oxidized [2Fe-2S]-[ferredoxin] + S-adenosyl-L-homocysteine. Specifically methylates position 2 of adenine 2503 in 23S rRNA and position 2 of adenine 37 in tRNAs. m2A2503 modification seems to play a crucial role in the proofreading step occurring at the peptidyl transferase center and thus would serve to optimize ribosomal fidelity. This is Dual-specificity RNA methyltransferase RlmN from Yersinia pseudotuberculosis serotype O:3 (strain YPIII).